We begin with the raw amino-acid sequence, 78 residues long: Putative membrane protein insertion efficiency factor (78 aa).

It belongs to the UPF0161 family.

Its subcellular location is the cell membrane. In terms of biological role, could be involved in insertion of integral membrane proteins into the membrane. The chain is Putative membrane protein insertion efficiency factor from Limosilactobacillus reuteri (strain DSM 20016) (Lactobacillus reuteri).